Reading from the N-terminus, the 107-residue chain is Large ribosomal subunit protein P2 (107 aa).

A disordered region spans residues 86-107 (PAAAAAEAEEEDDDDMGFGLFD). Residues 92–101 (EAEEEDDDDM) are compositionally biased toward acidic residues.

The protein belongs to the eukaryotic ribosomal protein P1/P2 family. P1 and P2 exist as dimers at the large ribosomal subunit. In terms of processing, phosphorylated.

Its function is as follows. Plays an important role in the elongation step of protein synthesis. This chain is Large ribosomal subunit protein P2, found in Trypanosoma brucei brucei.